A 168-amino-acid chain; its full sequence is MPLLDSFKVDHTRMHAPAVRVAKTMTTPKGDTITVFDLRFCVPNKEILPEKGIHTLEHLFAGFMRDHLNGNGVEIIDISPMGCRTGFYMSLIGTPSEQQVADAWLASMQDVLNVKDQSKIPELNEYQCGTYQMHSLAEAQQIAQNVLARKVAVNKNEELTLDEGLLNA.

The Fe cation site is built by histidine 54, histidine 58, and cysteine 128.

Belongs to the LuxS family. In terms of assembly, homodimer. Fe cation serves as cofactor.

The enzyme catalyses S-(5-deoxy-D-ribos-5-yl)-L-homocysteine = (S)-4,5-dihydroxypentane-2,3-dione + L-homocysteine. In terms of biological role, involved in the synthesis of autoinducer 2 (AI-2) which is secreted by bacteria and is used to communicate both the cell density and the metabolic potential of the environment. The regulation of gene expression in response to changes in cell density is called quorum sensing. Catalyzes the transformation of S-ribosylhomocysteine (RHC) to homocysteine (HC) and 4,5-dihydroxy-2,3-pentadione (DPD). This Neisseria meningitidis serogroup A / serotype 4A (strain DSM 15465 / Z2491) protein is S-ribosylhomocysteine lyase.